The following is an 835-amino-acid chain: MKVLALRHSVAQVYADTQTYLHDDSKDEYENAFLISNLTTHNILYLNYSLKTLKILNKSGIAAVEVQSPDELFALIRCNFTYDYENNIIYLHDYSYYTNNEIRTDQHWITKTDIIDYLLPGWKLTYVGYNGKNTRGHYNFSFSCQNAATDDDIIIEYIYSNELDFQNFLLRKIKERMTTSLPIARLSNRVFRDKLFPSIVNIYKKVINVGPRNESMFTFLNFPTIKQFSNGAYIVKHTIKLKQEKWLGKRVSQFDIGQYKNMLNVVTTIYYYYNLYHSKPIIYMLGSAPSYWIHDIKQYSDFTFETWDPLDTPYSTIHHKELFFDKDVNKLKDNSVLYIDIRTDRKNMDWKEWRKVVEQQTVNNLNIAYKYLSTGKAKVCCVKLTAMDLELPITAKLLHHPTTEVRSEFYAILDAWDIITIKRFIPKGVFYAFINNITTENVFIQPPFKLKASPTDYIVALYALSNDFNSRQDVINLINKQKQSLITVRMNNTFKDEPKVNFKNIYDWTFLPTDFELKDSIITSYDGCLGMFGLSISLSSKPTGNNHLFIINGTDKYYKLDQYANHMGISRRSHQIRFSESATSYSGYIFRDLSNNNFNLIGTNVENSVSGHVYNALIYYRYNYAFDLKRWIYLHSIGKVTVEGGRYYEHAPIELIYACRSAKEFAILQDDLTVLRYANEIEGYINKVYSITYADDPNYFIGIKFNSIPYEYDVKVPHLTLGVLFISDNMIHDVVTVLKKMKTELFKTEISTSYTYMLSDNIYVANASGVLSTYFKLYNMFYRNHITFGQSRMFIPHITLSFSNKQTVRIESTRLKINSIYLRKIKGETVFDMSE.

Residues 171–245 are N7-methyltransferase activity; sequence RKIKERMTTS…KHTIKLKQEK (75 aa). Residues 246-428 form a 2'-O-methyltransferase activity region; sequence WLGKRVSQFD…ITIKRFIPKG (183 aa). Positions 429–555 are N7-methyltransferase activity; sequence VFYAFINNIT…NHLFIINGTD (127 aa). Residues 556 to 692 form a GTase/RTPase activity region; sequence KYYKLDQYAN…GYINKVYSIT (137 aa). Residues 693-835 form a 2'-5'-phosphodiesterase activity region; it reads YADDPNYFIG…KGETVFDMSE (143 aa). Catalysis depends on for 2'-5'-phosphodiesterase activity residues H718, T720, H797, and T799.

It belongs to the rotavirus VP3 family. In terms of assembly, interacts with VP1. Interacts with VP2.

It is found in the virion. The catalysed reaction is a 5'-end diphospho-ribonucleoside in mRNA + GTP + H(+) = a 5'-end (5'-triphosphoguanosine)-ribonucleoside in mRNA + diphosphate. It carries out the reaction a 5'-end (5'-triphosphoguanosine)-ribonucleoside in mRNA + S-adenosyl-L-methionine = a 5'-end (N(7)-methyl 5'-triphosphoguanosine)-ribonucleoside in mRNA + S-adenosyl-L-homocysteine. The enzyme catalyses 5'-triphosphoadenylyl-(2'-&gt;5')-adenylyl-(2'-&gt;5')-adenosine + 2 H2O = 2 AMP + ATP + 2 H(+). Multifunctional enzyme involved in mRNA capping. Catalyzes the formation of the 5' cap structure on the viral plus-strand transcripts. Specifically binds to GTP and displays guanylyltransferase and methyltransferase activities. Has affinity for ssRNA but not for dsRNA. Capping activity is non-specific and caps RNAs that initiate with either a G or an A residue. Together with VP1 polymerase, forms a VP1-VP3 complex positioned near the channels situated at each of the five-fold vertices of the core. Following infection, the outermost layer of the virus is lost, leaving a double-layered particle (DLP) made up of the core and VP6 shell. VP1 then catalyzes the transcription of fully conservative plus-strand genomic RNAs that are capped by VP3 and extruded through the DLP's channels into the cytoplasm where they function as mRNAs for translation of viral proteins. DLPs probably have an RNA triphosphatase activity as well, whereas open cores do not. In terms of biological role, counteracts the host innate immune response thanks to its phosphodiesterase that degrades the 5'-triphosphorylated, 2'-5' linked adenylate oligomers produced by the host cell IFN-inducible 2',5'-oligoadenylate synthetase (OAS). The host RNaseL is therefore not activated. In Homo sapiens (Human), this protein is Protein VP3.